The sequence spans 2320 residues: Sperm-associated antigen 17 (2320 aa).

Composition is skewed to basic and acidic residues over residues 139 to 171 (DQQRRENEKKMVEERTKSEKDKGKGKSPKEKKV) and 199 to 210 (RRGEDDEAKSYI). Disordered stretches follow at residues 139 to 211 (DQQR…SYID), 388 to 407 (IPEPPPSTAPAPTGKKKAQY), 682 to 739 (AEQD…SMDQ), 894 to 928 (SASKIPGPKRSKTNKVSSKTELSDQEKDKEKEKDK), 950 to 1001 (EERL…AKTL), 1084 to 1118 (KEKEEKNSEEEEEEEEEKEEVEEKKPKEGEEEKVK), 1191 to 1221 (QGKGKAKPKGKEKHKDSIKEEELPKEEEKKN), 1334 to 1367 (SSPDSGPVYTSPELPTSPHNGDLVDSASQPKSET), 1393 to 1416 (DIIPEVPPPTPVESHIGTWFTTTP), 1983 to 2028 (KEAS…YENV), and 2080 to 2101 (TKESVSQRQTENVTRPPTEEPD). Positions 703 to 720 (VTGSTSNSTKPWNSSNRQ) are enriched in polar residues. Residues 865–965 (EEAKYQEAKM…EKKAEKKGKD (101 aa)) are a coiled coil. 2 stretches are compositionally biased toward basic and acidic residues: residues 914–928 (ELSDQEKDKEKEKDK) and 950–999 (EERL…EPAK). The span at 1090–1103 (NSEEEEEEEEEKEE) shows a compositional bias: acidic residues. Basic and acidic residues-rich tracts occupy residues 1104-1118 (VEEKKPKEGEEEKVK) and 1203-1221 (KHKDSIKEEELPKEEEKKN). Composition is skewed to polar residues over residues 2012–2028 (VNKSLQTSSSQNQYENV) and 2082–2094 (ESVSQRQTENVTR).

Interacts (via the C-terminus) with SPAG6; the interaction probably occurs on polymerized microtubules. As to expression, highly expressed in testis, round spermatids, testicular sperm, epididymal sperm and in condensing spermatids (at protein level). Expressed in organs that contain cilia-bearing cells including brain, oviduct, lung, and uterus. Expressed in articular cartilage and bone.

It is found in the cytoplasm. Its subcellular location is the cytoskeleton. The protein localises to the flagellum axoneme. The protein resides in the cytoplasmic vesicle. It localises to the secretory vesicle. It is found in the acrosome. Its subcellular location is the golgi apparatus. Its function is as follows. Component of the central pair apparatus of ciliary axonemes. Plays a critical role in the function and structure of motile cilia. May play a role in endochondral bone formation, most likely because of a function in primary cilia of chondrocytes and osteoblasts. Essential for normal spermatogenesis and male fertility. Required for normal manchette structure, transport of proteins along the manchette microtubules and formation of the sperm head and flagellum. Essential for sperm flagellum development and proper assembly of the respiratory motile cilia central pair apparatus, but not the brain ependymal cilia. The sequence is that of Sperm-associated antigen 17 (Spag17) from Mus musculus (Mouse).